The sequence spans 429 residues: 3-phosphoshikimate 1-carboxyvinyltransferase (429 aa).

3-phosphoshikimate-binding residues include lysine 11, serine 12, and arginine 16. Lysine 11 is a binding site for phosphoenolpyruvate. Residues glycine 82 and arginine 110 each coordinate phosphoenolpyruvate. 3-phosphoshikimate contacts are provided by serine 155, glutamine 157, aspartate 302, and lysine 329. Glutamine 157 serves as a coordination point for phosphoenolpyruvate. Residue aspartate 302 is the Proton acceptor of the active site. Positions 333 and 385 each coordinate phosphoenolpyruvate.

This sequence belongs to the EPSP synthase family. As to quaternary structure, monomer.

Its subcellular location is the cytoplasm. The catalysed reaction is 3-phosphoshikimate + phosphoenolpyruvate = 5-O-(1-carboxyvinyl)-3-phosphoshikimate + phosphate. It functions in the pathway metabolic intermediate biosynthesis; chorismate biosynthesis; chorismate from D-erythrose 4-phosphate and phosphoenolpyruvate: step 6/7. Catalyzes the transfer of the enolpyruvyl moiety of phosphoenolpyruvate (PEP) to the 5-hydroxyl of shikimate-3-phosphate (S3P) to produce enolpyruvyl shikimate-3-phosphate and inorganic phosphate. In Helicobacter pylori (strain G27), this protein is 3-phosphoshikimate 1-carboxyvinyltransferase.